A 1151-amino-acid chain; its full sequence is Zinc finger protein ZFPM2 (1151 aa).

Positions 1–13 (MSRRKQSKPRQIK) are enriched in basic residues. A disordered region spans residues 1–102 (MSRRKQSKPR…ETDDWDGPGE (102 aa)). 2 stretches are compositionally biased toward acidic residues: residues 18–33 (DAIEDEEEECPSEETD) and 70–82 (EGIQETAESDGDT). A CCHC FOG-type 1 zinc finger spans residues 244 to 277 (IVNKDIFPCKSCGIWYRSERNLQAHLMYYCSGRQ). 4 residues coordinate Zn(2+): cysteine 252, cysteine 255, histidine 268, and cysteine 273. The C2H2-type 1 zinc-finger motif lies at 296-320 (SLCPFPQCTKSFSNARALEMHLNSH). Lysine 324 participates in a covalent cross-link: Glycyl lysine isopeptide (Lys-Gly) (interchain with G-Cter in SUMO1). 2 consecutive C2H2-type zinc fingers follow at residues 335-357 (LKCTVCSYTADSVINFHQHLFSH) and 363-385 (FRCNHCHFGFQTQRELLQHQELH). Positions 389–487 (GKLPRESDME…RLASSPVQPN (99 aa)) are disordered. Composition is skewed to polar residues over residues 401–410 (PSATEDSLQP) and 419–431 (ELPQSQKAMQTKD). Residue lysine 444 forms a Glycyl lysine isopeptide (Lys-Gly) (interchain with G-Cter in SUMO2) linkage. A compositionally biased stretch (polar residues) spans 447-485 (LFLTNQRPEIQPTTNKQSFSYTKIKSEPSSPRLASSPVQ). Lysine 471 is covalently cross-linked (Glycyl lysine isopeptide (Lys-Gly) (interchain with G-Cter in SUMO1)). Residue serine 532 is modified to Phosphoserine. A CCHC FOG-type 2 zinc finger spans residues 542-575 (PLMPKGATCFECNITFNNLDNYLVHKKHYCSSRW). Zn(2+)-binding residues include cysteine 550, cysteine 553, histidine 566, and cysteine 571. The residue at position 581 (serine 581) is a Phosphoserine. Positions 636–683 (GPNGKGHDKDFSTQTKKLSTSSNNDDKINGKPVDVKNPSVPLVDGESD) are disordered. A compositionally biased stretch (polar residues) spans 647 to 658 (STQTKKLSTSSN). The segment at 681 to 714 (ESDPNKTTCEACNITFSRHETYMVHKQYYCATRH) adopts a CCHC FOG-type 3 zinc-finger fold. Cysteine 689, cysteine 692, histidine 705, and cysteine 710 together coordinate Zn(2+). A Nuclear localization signal motif is present at residues 736–740 (RKRRK). The interaction with CTBP2 stretch occupies residues 829–835 (PIDLSKK). The CCHC FOG-type 4 zinc finger occupies 848–881 (KRLLDYHECTVCKISFNKVENYLAHKQNFCPVTA). Residues cysteine 856, cysteine 859, histidine 872, and cysteine 877 each coordinate Zn(2+). At serine 904 the chain carries Phosphoserine. Glycyl lysine isopeptide (Lys-Gly) (interchain with G-Cter in SUMO1) cross-links involve residues lysine 915 and lysine 955. Residue serine 1014 is modified to Phosphoserine. A disordered region spans residues 1051–1095 (DERPAANPQQENISQNPQHEDDHKSPSWISENPLAANENVSPGIP). The segment covering 1057–1067 (NPQQENISQNP) has biased composition (polar residues). The segment at 1113-1146 (QAPTSGKYCRLCDIQFNNLSNFITHKKFYCSSHA) adopts a CCHC FOG-type 5 zinc-finger fold. Cysteine 1121, cysteine 1124, histidine 1137, and cysteine 1142 together coordinate Zn(2+).

Belongs to the FOG (Friend of GATA) family. In terms of assembly, interacts with the N-terminal zinc-finger of GATA4, GATA5 and probably GATA6. Interacts with retinoid nuclear receptor RXRA when ligand bound. Interacts with corepressor CTBP2; this interaction is however not essential for corepressor activity. Able to bind GATA1 in vitro. Interacts with NR2F2 and NR2F6. Interacts with ATOH8; mediates indirect interaction with GATA4. In terms of processing, sumoylation reduces transcriptional repression activity. In terms of tissue distribution, widely expressed at low level.

It localises to the nucleus. Transcription regulator that plays a central role in heart morphogenesis and development of coronary vessels from epicardium, by regulating genes that are essential during cardiogenesis. Essential cofactor that acts via the formation of a heterodimer with transcription factors of the GATA family GATA4, GATA5 and GATA6. Such heterodimer can both activate or repress transcriptional activity, depending on the cell and promoter context. Also required in gonadal differentiation, possibly be regulating expression of SRY. Probably acts a corepressor of NR2F2. This is Zinc finger protein ZFPM2 (ZFPM2) from Homo sapiens (Human).